Consider the following 402-residue polypeptide: Deoxyguanosinetriphosphate triphosphohydrolase-like protein (402 aa).

A disordered region spans residues 20–39; the sequence is PAFSRGRLVPEPESPTRTPF. The region spanning 73–217 is the HD domain; sequence RLTHTIEVAQ…AAIADDIAYN (145 aa).

Belongs to the dGTPase family. Type 2 subfamily.

The chain is Deoxyguanosinetriphosphate triphosphohydrolase-like protein from Brucella canis (strain ATCC 23365 / NCTC 10854 / RM-666).